We begin with the raw amino-acid sequence, 1081 residues long: Psi-producing oxygenase A (1081 aa).

The tract at residues 105 to 446 (TKSFLNMLWN…DGAFNDDDLV (342 aa)) is linoleate 8R-lipoxygenase. A heme b-binding site is contributed by H202. Residue Y374 is part of the active site. H377 is a heme b binding site. The tract at residues 654 to 1081 (IFISSHAACM…GELPQLKEDF (428 aa)) is 9,12-octadecadienoate 8-hydroperoxide 8R-isomerase.

Belongs to the peroxidase family. In terms of assembly, homotetramer. Heme b serves as cofactor.

The enzyme catalyses (9Z,12Z)-octadecadienoate + O2 = (8R,9Z,12Z)-8-hydroperoxyoctadeca-9,12-dienoate. The catalysed reaction is (8R,9Z,12Z)-8-hydroperoxyoctadeca-9,12-dienoate = (5S,8R,9Z,12Z)-5,8-dihydroxyoctadeca-9,12-dienoate. In terms of biological role, bifunctional heme-containing enzyme that oxidizes linoleic acid to (8R,9Z,12Z)-8-hydroperoxyoctadeca-9,12-dienoate (within the N-terminal heme peroxidase domain), which is subsequently isomerized to (5S,8R,9Z,12Z)-5,8-dihydroxyoctadeca-9,12-dienoate (within the C-terminal P450 heme thiolate domain). Oxidized unsaturated fatty acids, so-called oxylipins, derived from endogenous fatty acids, influence the development of the asexual conidiophores and sexual cleistothecia and regulate the secondary metabolism. These substances were collectively named psi factors and are primarily a mixture of hydroxylated oleic, linoleic and alpha-linolenic acids. They are termed psi-beta, psi-alpha, and psi-gamma, respectively. The sequence is that of Psi-producing oxygenase A (ppoA) from Emericella nidulans (Aspergillus nidulans).